A 145-amino-acid polypeptide reads, in one-letter code: Late embryogenesis abundant protein D-11 (145 aa).

A compositionally biased stretch (polar residues) spans 1–18 (MAHFQNQYSAPEVTQTDA). Positions 1–136 (MAHFQNQYSA…EAPWSPQPLI (136 aa)) are disordered. Basic residues predominate over residues 47–57 (GHHHGGHHGLH). Positions 58 to 68 (RTGSSSSSSSS) are enriched in low complexity. A compositionally biased stretch (basic and acidic residues) spans 82–96 (KERLKEKIPGNKEHQ). The span at 97-107 (SQATSTTTPGQ) shows a compositional bias: polar residues.

The protein belongs to the plant dehydrin family.

Functionally, LEA protein are late embryogenesis abundant in higher plant seed embryos. There are two subsets of LEA proteins (5a, and 5b), the first ones are expressed when the cotyledon weight reach 80 mg and the second set are expressed above 100 mg. The function of those proteins is not known. The sequence is that of Late embryogenesis abundant protein D-11 from Gossypium hirsutum (Upland cotton).